The sequence spans 151 residues: MYCPFCHNDQSRVIDSRVIDSGSAIRRRRECTQCKNRFTTVEKAQLLVVKRNGLTEPFSREKVIVGVRRACQGRDVSDDALKRLAQQVEERVRLHGSSQIHANEIGLAILEPLRELDEVAYLRFASVYKSFESADDFESEIRLMRRRDRSN.

The segment at 3 to 34 (CPFCHNDQSRVIDSRVIDSGSAIRRRRECTQC) is a zinc-finger region. Residues 46 to 136 (LLVVKRNGLT…VYKSFESADD (91 aa)) form the ATP-cone domain.

The protein belongs to the NrdR family. It depends on Zn(2+) as a cofactor.

Its function is as follows. Negatively regulates transcription of bacterial ribonucleotide reductase nrd genes and operons by binding to NrdR-boxes. The chain is Transcriptional repressor NrdR from Corynebacterium diphtheriae (strain ATCC 700971 / NCTC 13129 / Biotype gravis).